The primary structure comprises 279 residues: HTH-type transcriptional regulator HdfR (279 aa).

Positions 1–58 constitute an HTH lysR-type domain; the sequence is MDTELLKTFLEVSRTRHFGRAAESLYLTQSAVSFRIRQLENQLGVNLFTRHRNNIRLT. The segment at residues 18 to 37 is a DNA-binding region (H-T-H motif); it reads FGRAAESLYLTQSAVSFRIR.

Belongs to the LysR transcriptional regulatory family.

Functionally, negatively regulates the transcription of the flagellar master operon flhDC by binding to the upstream region of the operon. The protein is HTH-type transcriptional regulator HdfR of Escherichia fergusonii (strain ATCC 35469 / DSM 13698 / CCUG 18766 / IAM 14443 / JCM 21226 / LMG 7866 / NBRC 102419 / NCTC 12128 / CDC 0568-73).